The chain runs to 1193 residues: Laminin subunit gamma-2 (1193 aa).

An N-terminal signal peptide occupies residues 1–21 (MPALWLGCCLCFSLLLPAARA). 12 disulfides stabilise this stretch: Cys28–Cys37, Cys30–Cys53, Cys56–Cys65, Cys68–Cys81, Cys84–Cys96, Cys86–Cys102, Cys104–Cys113, Cys116–Cys128, Cys139–Cys150, Cys141–Cys155, Cys157–Cys166, and Cys169–Cys184. Laminin EGF-like domains follow at residues 28–83 (CDCN…RCLP), 84–130 (CNCN…GCTQ), and 139–186 (CDCD…GCTQ). Residues 187–196 (CFCYGHSASC) form the Laminin EGF-like 4; first part domain. One can recognise a Laminin IV type A domain in the interval 213–381 (QDVDGWKAVQ…SGAPAPWVEQ (169 aa)). N-linked (GlcNAc...) asparagine glycans are attached at residues Asn342 and Asn362. A Laminin EGF-like 4; second part domain is found at 382-415 (CICPVGYKGQFCQDCASGYKRDSARLGPFGTCIP). Laminin EGF-like domains are found at residues 416-461 (CNCQ…SCKP), 462-516 (CPCH…PCQP), and 517-572 (CQCN…KCRA). 11 disulfides stabilise this stretch: Cys462-Cys470, Cys464-Cys481, Cys484-Cys493, Cys496-Cys514, Cys517-Cys531, Cys519-Cys538, Cys541-Cys550, Cys553-Cys570, Cys573-Cys585, Cys575-Cys591, and Cys593-Cys602. Residues 573–602 (CNCNPMGSEPVGCRSDGTCVCKPGFGGPNC) form the Laminin EGF-like 8; truncated domain. Residues 603–1193 (EHGAFSCPAC…CYNTQALEQQ (591 aa)) form a domain II and I region. Residues 611 to 718 (ACYNQVKIQM…GSQYQNRVRD (108 aa)) are a coiled coil. O-linked (Xyl...) (chondroitin sulfate) serine glycans are attached at residues Ser803 and Ser805. Coiled coils occupy residues 811–1076 (AVVQ…AVQM) and 1117–1193 (EEGL…LEQQ). 2 N-linked (GlcNAc...) asparagine glycosylation sites follow: Asn942 and Asn1033.

In terms of assembly, laminin is a complex glycoprotein, consisting of three different polypeptide chains (alpha, beta, gamma), which are bound to each other by disulfide bonds into a cross-shaped molecule comprising one long and three short arms with globules at each end. Gamma-2 is a subunit of laminin-5 (laminin-332 or epiligrin/kalinin/nicein). In terms of processing, O-glycosylated; contains chondroitin sulfate (CS). CS attachment is on either Ser-803 or Ser-805. In terms of tissue distribution, the large variant is expressed only in specific epithelial cells of embryonic and neonatal tissues. In 17-week old embryo the small variant is found in cerebral cortex, lung, and distal tubes of kidney, but not in epithelia except for distal tubuli.

The protein resides in the secreted. Its subcellular location is the extracellular space. The protein localises to the extracellular matrix. It localises to the basement membrane. In terms of biological role, binding to cells via a high affinity receptor, laminin is thought to mediate the attachment, migration and organization of cells into tissues during embryonic development by interacting with other extracellular matrix components. Ladsin exerts cell-scattering activity toward a wide variety of cells, including epithelial, endothelial, and fibroblastic cells. The protein is Laminin subunit gamma-2 (LAMC2) of Homo sapiens (Human).